Here is a 462-residue protein sequence, read N- to C-terminus: Cysteine--tRNA ligase (462 aa).

Cysteine 29 contacts Zn(2+). The short motif at 31-41 (PTVYDHAHIGN) is the 'HIGH' region element. Zn(2+) contacts are provided by cysteine 214, histidine 239, and glutamate 243. Positions 272-276 (KMSKS) match the 'KMSKS' region motif. ATP is bound at residue lysine 275.

Belongs to the class-I aminoacyl-tRNA synthetase family. In terms of assembly, monomer. It depends on Zn(2+) as a cofactor.

The protein localises to the cytoplasm. The catalysed reaction is tRNA(Cys) + L-cysteine + ATP = L-cysteinyl-tRNA(Cys) + AMP + diphosphate. In Xanthobacter autotrophicus (strain ATCC BAA-1158 / Py2), this protein is Cysteine--tRNA ligase.